The chain runs to 239 residues: 1-(5-phosphoribosyl)-5-[(5-phosphoribosylamino)methylideneamino] imidazole-4-carboxamide isomerase (239 aa).

Aspartate 8 serves as the catalytic Proton acceptor. Aspartate 129 (proton donor) is an active-site residue.

Belongs to the HisA/HisF family.

It localises to the cytoplasm. The enzyme catalyses 1-(5-phospho-beta-D-ribosyl)-5-[(5-phospho-beta-D-ribosylamino)methylideneamino]imidazole-4-carboxamide = 5-[(5-phospho-1-deoxy-D-ribulos-1-ylimino)methylamino]-1-(5-phospho-beta-D-ribosyl)imidazole-4-carboxamide. Its pathway is amino-acid biosynthesis; L-histidine biosynthesis; L-histidine from 5-phospho-alpha-D-ribose 1-diphosphate: step 4/9. The polypeptide is 1-(5-phosphoribosyl)-5-[(5-phosphoribosylamino)methylideneamino] imidazole-4-carboxamide isomerase (Bacillus thuringiensis (strain Al Hakam)).